The primary structure comprises 908 residues: MQTHEIRKRFLDHFVKAGHTEVPSASVILDDPNLLFVNAGMVQFVPFFLGQCTPPYATATSIQKCIRTPDIDDVGITTRHNTFFQMAGNFSFGDYFKRGAIELAWALLTNSFADGGYGLDPERLWATVYLDDDEAAGLWQEIAGLPPERIQRRGMADNYWSMGIPGPCGPSSEIYYDRGPEFGPEGGPIVNEDRYLEVWNLVFMQNERGEGTTKEDYEIRGPLPRKNIDTGMGVERIALVLQGVHNVYEIDLLRPVIDLVATRAPRPYDPENEDTNHADNVRYRIIADHSRTAAILIGDGVSPVNDGRGYVLRRLLRRIIRSAKLLGIDSPIVGDLMATVCNAMGRAYPGLVTDFDRINRIAVAEETAFNRTLTSGSKLFDDVVGATVASGSTVVAGLDAFTLHDTYGFPIELTLEMAAEAGLTVDEKGFHELMLQQRQRAKVDAAARKQAHVDLTAYRELVDAGPTEFTGFDELTTEARILGIFVEGKRVPVVAHAVRGQAGITNRVELVLDRTPLYAESGGQIADAGTISGIGAGASSRAAVTDVQKIAKTLHVHRVNLESGEFVEGDTVVAVVDPGWRRGAAQGHSGTHIVHAALRQVLGPNAVQAGSLNRPGYLRFDFNWQGSLTGEQRTQIEEVTNEAVQADFEVHTFTEKLDTAKAMGAIALFGEAYPDEVRVVEMGGPFSLELCGGTHVHNTAQIGPVTILGESSIGSGVRRVEAYVGLDSFRHLAKERALMAGLASSLQVPSEEVHARVATLVERLKAAEKELERARQANVQAAATKAAAGAEWIGNVRVVVQRMSGPIAPDDLRFLVGDIRGKLGSDPAVVALIAVTSDGPTATVPYAVAANPAAQDLGIRANDLVEQLAMVVDGRGGGKADLAQGSGKDPTGIDAALDTVRAQIAQVG.

Residues His-588, His-592, Cys-691, and His-695 each contribute to the Zn(2+) site.

The protein belongs to the class-II aminoacyl-tRNA synthetase family. Zn(2+) is required as a cofactor.

The protein resides in the cytoplasm. It catalyses the reaction tRNA(Ala) + L-alanine + ATP = L-alanyl-tRNA(Ala) + AMP + diphosphate. Catalyzes the attachment of alanine to tRNA(Ala) in a two-step reaction: alanine is first activated by ATP to form Ala-AMP and then transferred to the acceptor end of tRNA(Ala). Also edits incorrectly charged Ser-tRNA(Ala) and Gly-tRNA(Ala) via its editing domain. This is Alanine--tRNA ligase from Mycobacterium leprae (strain TN).